Here is a 200-residue protein sequence, read N- to C-terminus: Nascent polypeptide-associated complex subunit alpha (200 aa).

A compositionally biased stretch (basic and acidic residues) spans 1–19 (MADPRVEELPEEEVKKTQV). Disordered stretches follow at residues 1–54 (MADP…NEKK) and 118–165 (AAQQ…EDKD). A compositionally biased stretch (acidic residues) spans 20–34 (EDLDNSSDDESDIEA). The NAC-A/B domain maps to 49-114 (SRNEKKARKA…AKIEDLNASA (66 aa)). Residues 127 to 146 (AEHDHAGHTHEHEEAGKAKE) show a composition bias toward basic and acidic residues. Residues 147–160 (EEEEDEGEEVDAEG) are compositionally biased toward acidic residues. Residues 161–200 (IEDKDIELVMTQANVSRKKAIKALKENDNDIVNSIMALSI) enclose the UBA domain.

The protein belongs to the NAC-alpha family. In terms of assembly, part of the nascent polypeptide-associated complex (NAC), consisting of npc-1/egd2 and npc-2/egd1. NAC associates with ribosomes via npc-2/egd1.

It localises to the cytoplasm. The protein localises to the nucleus. In terms of biological role, component of the nascent polypeptide-associated complex (NAC), a dynamic component of the ribosomal exit tunnel, protecting the emerging polypeptides from interaction with other cytoplasmic proteins to ensure appropriate nascent protein targeting. The NAC complex also promotes mitochondrial protein import by enhancing productive ribosome interactions with the outer mitochondrial membrane and blocks the inappropriate interaction of ribosomes translating non-secretory nascent polypeptides with translocation sites in the membrane of the endoplasmic reticulum. Npc-1/egd2 may also be involved in transcription regulation. This is Nascent polypeptide-associated complex subunit alpha (npc-1) from Neurospora crassa (strain ATCC 24698 / 74-OR23-1A / CBS 708.71 / DSM 1257 / FGSC 987).